The primary structure comprises 272 residues: S-adenosylmethionine decarboxylase proenzyme (272 aa).

Ser-117 serves as the catalytic Schiff-base intermediate with substrate; via pyruvic acid. Ser-117 is subject to Pyruvic acid (Ser); by autocatalysis. His-122 functions as the Proton acceptor; for processing activity in the catalytic mechanism. Cys-145 (proton donor; for catalytic activity) is an active-site residue.

It belongs to the prokaryotic AdoMetDC family. Type 2 subfamily. Heterooctamer of four alpha and four beta chains arranged as a tetramer of alpha/beta heterodimers. It depends on pyruvate as a cofactor. Is synthesized initially as an inactive proenzyme. Formation of the active enzyme involves a self-maturation process in which the active site pyruvoyl group is generated from an internal serine residue via an autocatalytic post-translational modification. Two non-identical subunits are generated from the proenzyme in this reaction, and the pyruvate is formed at the N-terminus of the alpha chain, which is derived from the carboxyl end of the proenzyme. The post-translation cleavage follows an unusual pathway, termed non-hydrolytic serinolysis, in which the side chain hydroxyl group of the serine supplies its oxygen atom to form the C-terminus of the beta chain, while the remainder of the serine residue undergoes an oxidative deamination to produce ammonia and the pyruvoyl group blocking the N-terminus of the alpha chain.

The catalysed reaction is S-adenosyl-L-methionine + H(+) = S-adenosyl 3-(methylsulfanyl)propylamine + CO2. It participates in amine and polyamine biosynthesis; S-adenosylmethioninamine biosynthesis; S-adenosylmethioninamine from S-adenosyl-L-methionine: step 1/1. Functionally, catalyzes the decarboxylation of S-adenosylmethionine to S-adenosylmethioninamine (dcAdoMet), the propylamine donor required for the synthesis of the polyamines spermine and spermidine from the diamine putrescine. This is S-adenosylmethionine decarboxylase proenzyme from Halorhodospira halophila (strain DSM 244 / SL1) (Ectothiorhodospira halophila (strain DSM 244 / SL1)).